We begin with the raw amino-acid sequence, 181 residues long: Putative manganese efflux pump MntP (181 aa).

The next 6 helical transmembrane spans lie at 3-23, 42-62, 63-83, 101-121, 124-144, and 160-180; these read LIFL…ANGA, IFQA…VGFI, SYID…KMIK, LMLG…TFSF, INIA…CVIA, and LVLG…THLI.

This sequence belongs to the MntP (TC 9.B.29) family.

Its subcellular location is the cell inner membrane. Probably functions as a manganese efflux pump. In Campylobacter fetus subsp. fetus (strain 82-40), this protein is Putative manganese efflux pump MntP.